Consider the following 129-residue polypeptide: Small ribosomal subunit protein uS11 (129 aa).

Belongs to the universal ribosomal protein uS11 family. As to quaternary structure, part of the 30S ribosomal subunit. Interacts with proteins S7 and S18. Binds to IF-3.

Its function is as follows. Located on the platform of the 30S subunit, it bridges several disparate RNA helices of the 16S rRNA. Forms part of the Shine-Dalgarno cleft in the 70S ribosome. The sequence is that of Small ribosomal subunit protein uS11 from Aliivibrio fischeri (strain ATCC 700601 / ES114) (Vibrio fischeri).